The chain runs to 164 residues: 6,7-dimethyl-8-ribityllumazine synthase (164 aa).

Residues phenylalanine 28, 62–64 (ALE), and 86–88 (AVI) contribute to the 5-amino-6-(D-ribitylamino)uracil site. 91–92 (ET) contacts (2S)-2-hydroxy-3-oxobutyl phosphate. Histidine 94 functions as the Proton donor in the catalytic mechanism. Asparagine 119 is a binding site for 5-amino-6-(D-ribitylamino)uracil. Arginine 133 provides a ligand contact to (2S)-2-hydroxy-3-oxobutyl phosphate.

The protein belongs to the DMRL synthase family.

It carries out the reaction (2S)-2-hydroxy-3-oxobutyl phosphate + 5-amino-6-(D-ribitylamino)uracil = 6,7-dimethyl-8-(1-D-ribityl)lumazine + phosphate + 2 H2O + H(+). It participates in cofactor biosynthesis; riboflavin biosynthesis; riboflavin from 2-hydroxy-3-oxobutyl phosphate and 5-amino-6-(D-ribitylamino)uracil: step 1/2. Its function is as follows. Catalyzes the formation of 6,7-dimethyl-8-ribityllumazine by condensation of 5-amino-6-(D-ribitylamino)uracil with 3,4-dihydroxy-2-butanone 4-phosphate. This is the penultimate step in the biosynthesis of riboflavin. The polypeptide is 6,7-dimethyl-8-ribityllumazine synthase (Nitrosomonas europaea (strain ATCC 19718 / CIP 103999 / KCTC 2705 / NBRC 14298)).